Consider the following 307-residue polypeptide: Ubiquitin recognition factor in ER-associated degradation protein 1 (307 aa).

Met-1 bears the N-acetylmethionine mark. Ser-129, Ser-231, Ser-245, Ser-247, and Ser-299 each carry phosphoserine. 2 disordered regions span residues 231 to 256 and 288 to 307; these read SGNR…DIKR and GRFV…GRKP.

The protein belongs to the UFD1 family. Heterodimer with NPLOC4, this heterodimer binds VCP and inhibits Golgi membrane fusion. Interacts with USP13. Interacts with ZFAND2B; probably through VCP. As to expression, found in adult heart, skeletal muscle and pancreas, and in fetal liver and kidney.

The protein resides in the nucleus. It localises to the cytoplasm. It is found in the cytosol. It functions in the pathway protein degradation; proteasomal ubiquitin-dependent pathway. Its function is as follows. Essential component of the ubiquitin-dependent proteolytic pathway which degrades ubiquitin fusion proteins. The ternary complex containing UFD1, VCP and NPLOC4 binds ubiquitinated proteins and is necessary for the export of misfolded proteins from the ER to the cytoplasm, where they are degraded by the proteasome. The NPLOC4-UFD1-VCP complex regulates spindle disassembly at the end of mitosis and is necessary for the formation of a closed nuclear envelope. It may be involved in the development of some ectoderm-derived structures. Acts as a negative regulator of type I interferon production via the complex formed with VCP and NPLOC4, which binds to RIGI and recruits RNF125 to promote ubiquitination and degradation of RIGI. The polypeptide is Ubiquitin recognition factor in ER-associated degradation protein 1 (Homo sapiens (Human)).